Consider the following 244-residue polypeptide: Transcriptional activator protein PhzR (244 aa).

In terms of domain architecture, HTH luxR-type spans 177–242 (AFNTDVEFSE…QAVSYAVALG (66 aa)). Positions 201–220 (SEEIGVIMGVCTDTVNYHHR) form a DNA-binding region, H-T-H motif.

The protein belongs to the autoinducer-regulated transcriptional regulatory protein family.

In terms of biological role, positive regulator of phenazine antibiotic production. May activate the phenazine biosynthetic genes by binding to a DNA sequence upstream of them, or to an intermediate gene which, in turn, interacts with them. The chain is Transcriptional activator protein PhzR (phzR) from Pseudomonas fluorescens.